The following is a 66-amino-acid chain: COP-associated protein (66 aa).

An HMA domain is found at 1–66; that stretch reads MKIDIPVKGM…AILDAGYELG (66 aa). 2 residues coordinate Cu cation: cysteine 12 and cysteine 15.

Functionally, part of a cation-transporting system which is associated with copper export out of the H.pylori cells. The protein is COP-associated protein (copP) of Helicobacter felis (strain ATCC 49179 / CCUG 28539 / NCTC 12436 / CS1).